We begin with the raw amino-acid sequence, 29 residues long: Cytochrome b6-f complex subunit 8 (29 aa).

A helical transmembrane segment spans residues 3–23 (ILSLGWAALMTMFTFSLALTV).

Belongs to the PetN family. The 4 large subunits of the cytochrome b6-f complex are cytochrome b6, subunit IV (17 kDa polypeptide, PetD), cytochrome f and the Rieske protein, while the 4 small subunits are PetG, PetL, PetM and PetN. The complex functions as a dimer.

It is found in the plastid. Its subcellular location is the chloroplast thylakoid membrane. Functionally, component of the cytochrome b6-f complex, which mediates electron transfer between photosystem II (PSII) and photosystem I (PSI), cyclic electron flow around PSI, and state transitions. The sequence is that of Cytochrome b6-f complex subunit 8 from Phaeodactylum tricornutum (strain CCAP 1055/1).